The primary structure comprises 216 residues: Large ribosomal subunit protein uL3 (216 aa).

The disordered stretch occupies residues 134–153; sequence RATHGNSRSHNVPGSIGMAQ. Q153 is subject to N5-methylglutamine.

Belongs to the universal ribosomal protein uL3 family. As to quaternary structure, part of the 50S ribosomal subunit. Forms a cluster with proteins L14 and L19. Post-translationally, methylated by PrmB.

In terms of biological role, one of the primary rRNA binding proteins, it binds directly near the 3'-end of the 23S rRNA, where it nucleates assembly of the 50S subunit. In Cupriavidus taiwanensis (strain DSM 17343 / BCRC 17206 / CCUG 44338 / CIP 107171 / LMG 19424 / R1) (Ralstonia taiwanensis (strain LMG 19424)), this protein is Large ribosomal subunit protein uL3.